A 177-amino-acid chain; its full sequence is Peptide deformylase (177 aa).

Residues C98 and H140 each contribute to the Fe cation site. The active site involves E141. A Fe cation-binding site is contributed by H144.

This sequence belongs to the polypeptide deformylase family. Requires Fe(2+) as cofactor.

The catalysed reaction is N-terminal N-formyl-L-methionyl-[peptide] + H2O = N-terminal L-methionyl-[peptide] + formate. In terms of biological role, removes the formyl group from the N-terminal Met of newly synthesized proteins. Requires at least a dipeptide for an efficient rate of reaction. N-terminal L-methionine is a prerequisite for activity but the enzyme has broad specificity at other positions. The sequence is that of Peptide deformylase from Zymomonas mobilis subsp. mobilis (strain ATCC 31821 / ZM4 / CP4).